A 585-amino-acid chain; its full sequence is Membrane protein insertase YidC (585 aa).

A run of 6 helical transmembrane segments spans residues 5–25, 338–358, 362–382, 432–452, 482–502, and 518–538; these read SVTGLALIALIMIVWLQFMSP, FGWDWLTRPFAEFVILPAFTW, FVSNYGLIIIIFAFLIKLVTY, LGGCLPVVLQMPLLFAMFYVF, IPMYGSHIALLPILMAVTVFL, and IMLYMFPAMMLLFFNNMPSGL.

It belongs to the OXA1/ALB3/YidC family. Type 1 subfamily. As to quaternary structure, interacts with the Sec translocase complex via SecD. Specifically interacts with transmembrane segments of nascent integral membrane proteins during membrane integration.

The protein localises to the cell inner membrane. In terms of biological role, required for the insertion and/or proper folding and/or complex formation of integral membrane proteins into the membrane. Involved in integration of membrane proteins that insert both dependently and independently of the Sec translocase complex, as well as at least some lipoproteins. Aids folding of multispanning membrane proteins. The chain is Membrane protein insertase YidC from Chlorobium luteolum (strain DSM 273 / BCRC 81028 / 2530) (Pelodictyon luteolum).